The chain runs to 136 residues: Piercer of microtubule wall 1 protein (136 aa).

Over residues Met-1–Lys-16 the composition is skewed to basic and acidic residues. The tract at residues Met-1 to Trp-27 is disordered.

This sequence belongs to the PIERCE1 family. Microtubule inner protein component of sperm flagellar doublet microtubules. Interacts with CFAP53, ODAD1 and ODAD3; the interactions link the outer dynein arms docking complex (ODA-DC) to the internal microtubule inner proteins (MIP) in cilium axoneme. In terms of tissue distribution, expressed in trachea multiciliated cells.

The protein localises to the cytoplasm. It is found in the cytoskeleton. It localises to the cilium axoneme. The protein resides in the flagellum axoneme. In terms of biological role, microtubule inner protein involved in the attachment of outer dynein arms (ODAs) to dynein-decorated doublet microtubules (DMTs) in cilia axoneme, which is required for motile cilia beating. Functions at the initial step of left-right asymmetry specification of the visceral organs. In Bos taurus (Bovine), this protein is Piercer of microtubule wall 1 protein (PIERCE1).